Reading from the N-terminus, the 149-residue chain is Transcription antitermination protein NusB (149 aa).

Belongs to the NusB family.

Its function is as follows. Involved in transcription antitermination. Required for transcription of ribosomal RNA (rRNA) genes. Binds specifically to the boxA antiterminator sequence of the ribosomal RNA (rrn) operons. The polypeptide is Transcription antitermination protein NusB (Acinetobacter baumannii (strain AB307-0294)).